The chain runs to 495 residues: Glycerol kinase (495 aa).

Threonine 13 contributes to the ADP binding site. Threonine 13, threonine 14, and serine 15 together coordinate ATP. Threonine 13 provides a ligand contact to sn-glycerol 3-phosphate. Arginine 17 lines the ADP pocket. Residues arginine 83, glutamate 84, tyrosine 135, and aspartate 244 each contribute to the sn-glycerol 3-phosphate site. Positions 83, 84, 135, 244, and 245 each coordinate glycerol. ADP-binding residues include threonine 266 and glycine 309. Residues threonine 266, glycine 309, glutamine 313, and glycine 410 each coordinate ATP. The ADP site is built by glycine 410 and asparagine 414.

Belongs to the FGGY kinase family.

The enzyme catalyses glycerol + ATP = sn-glycerol 3-phosphate + ADP + H(+). It participates in polyol metabolism; glycerol degradation via glycerol kinase pathway; sn-glycerol 3-phosphate from glycerol: step 1/1. With respect to regulation, inhibited by fructose 1,6-bisphosphate (FBP). Functionally, key enzyme in the regulation of glycerol uptake and metabolism. Catalyzes the phosphorylation of glycerol to yield sn-glycerol 3-phosphate. The chain is Glycerol kinase from Shewanella woodyi (strain ATCC 51908 / MS32).